An 882-amino-acid chain; its full sequence is Translation initiation factor IF-2 (882 aa).

A disordered region spans residues 28–294; that stretch reads GIRKSADDSV…SSLQQGFQKP (267 aa). Positions 67-81 are enriched in polar residues; sequence STLNIPGTGGKSKSV. Residues 92-209 show a composition bias toward basic and acidic residues; sequence VKRDPQEAER…RMAEENKWTD (118 aa). The segment covering 244–258 has biased composition (basic residues); that stretch reads GRGRNAKAARPKKGN. Residues 259-272 are compositionally biased toward basic and acidic residues; that stretch reads KHAESKADREEARA. Residues 381–550 enclose the tr-type G domain; that stretch reads PRAPVVTIMG…LLQAEVLELK (170 aa). The G1 stretch occupies residues 390 to 397; it reads GHVDHGKT. Residue 390-397 coordinates GTP; that stretch reads GHVDHGKT. A G2 region spans residues 415 to 419; sequence GITQH. A G3 region spans residues 436-439; sequence DTPG. Residues 436 to 440 and 490 to 493 each bind GTP; these read DTPGH and NKID. Residues 490–493 form a G4 region; that stretch reads NKID. The tract at residues 526 to 528 is G5; that stretch reads SAK. Lys-800 carries the N6-acetyllysine modification.

Belongs to the TRAFAC class translation factor GTPase superfamily. Classic translation factor GTPase family. IF-2 subfamily.

The protein resides in the cytoplasm. Functionally, one of the essential components for the initiation of protein synthesis. Protects formylmethionyl-tRNA from spontaneous hydrolysis and promotes its binding to the 30S ribosomal subunits. Also involved in the hydrolysis of GTP during the formation of the 70S ribosomal complex. The protein is Translation initiation factor IF-2 of Shigella flexneri serotype 5b (strain 8401).